Consider the following 381-residue polypeptide: tRNA pseudouridine synthase D (381 aa).

The active-site Nucleophile is Asp81. Residues 160 to 335 (GMPNYFGSQR…TLGSRRFFWV (176 aa)) form the TRUD domain.

Belongs to the pseudouridine synthase TruD family.

It catalyses the reaction uridine(13) in tRNA = pseudouridine(13) in tRNA. Responsible for synthesis of pseudouridine from uracil-13 in transfer RNAs. This Helicobacter acinonychis (strain Sheeba) protein is tRNA pseudouridine synthase D.